The chain runs to 143 residues: Probable glycine cleavage system H protein (143 aa).

The 83-residue stretch at 36–118 folds into the Lipoyl-binding domain; sequence VATVGITDFA…YGEGWIFKIK (83 aa). Residue K77 is modified to N6-lipoyllysine.

This sequence belongs to the GcvH family. The glycine cleavage system is composed of four proteins: P, T, L and H. (R)-lipoate serves as cofactor.

In terms of biological role, the glycine cleavage system catalyzes the degradation of glycine. The H protein shuttles the methylamine group of glycine from the P protein to the T protein. This Aeropyrum pernix (strain ATCC 700893 / DSM 11879 / JCM 9820 / NBRC 100138 / K1) protein is Probable glycine cleavage system H protein.